Consider the following 178-residue polypeptide: ATP synthase subunit delta (178 aa).

It belongs to the ATPase delta chain family. In terms of assembly, F-type ATPases have 2 components, F(1) - the catalytic core - and F(0) - the membrane proton channel. F(1) has five subunits: alpha(3), beta(3), gamma(1), delta(1), epsilon(1). F(0) has three main subunits: a(1), b(2) and c(10-14). The alpha and beta chains form an alternating ring which encloses part of the gamma chain. F(1) is attached to F(0) by a central stalk formed by the gamma and epsilon chains, while a peripheral stalk is formed by the delta and b chains.

Its subcellular location is the cell inner membrane. Functionally, f(1)F(0) ATP synthase produces ATP from ADP in the presence of a proton or sodium gradient. F-type ATPases consist of two structural domains, F(1) containing the extramembraneous catalytic core and F(0) containing the membrane proton channel, linked together by a central stalk and a peripheral stalk. During catalysis, ATP synthesis in the catalytic domain of F(1) is coupled via a rotary mechanism of the central stalk subunits to proton translocation. Its function is as follows. This protein is part of the stalk that links CF(0) to CF(1). It either transmits conformational changes from CF(0) to CF(1) or is implicated in proton conduction. The sequence is that of ATP synthase subunit delta from Ectopseudomonas mendocina (strain ymp) (Pseudomonas mendocina).